The following is a 116-amino-acid chain: Putative iron-sulfur cluster insertion protein ErpA (116 aa).

The iron-sulfur cluster site is built by C44, C108, and C110.

Belongs to the HesB/IscA family. Homodimer. Iron-sulfur cluster is required as a cofactor.

Its function is as follows. Required for insertion of 4Fe-4S clusters. This is Putative iron-sulfur cluster insertion protein ErpA from Azoarcus sp. (strain BH72).